We begin with the raw amino-acid sequence, 238 residues long: uncharacterized protein (238 aa).

Belongs to the helicase family. Yeast subtelomeric Y' repeat subfamily.

This is an uncharacterized protein from Saccharomyces cerevisiae (strain ATCC 204508 / S288c) (Baker's yeast).